Reading from the N-terminus, the 449-residue chain is Putative tartrate transporter (449 aa).

11 consecutive transmembrane segments (helical) span residues 34-54 (IVPF…NIGF), 64-84 (GFSS…YFLF), 99-119 (IWIA…AFVQ), 130-150 (LLGV…SFWF), 156-176 (AAVT…GSPI), 194-214 (WMFL…LFFL), 259-279 (VIAL…LGIW), 292-312 (IEVG…MVLW), 336-356 (GLAF…LTIV), 367-387 (LWSM…IATI), and 414-434 (GGLY…LILA).

The protein belongs to the major facilitator superfamily. Phthalate permease family.

It localises to the cell membrane. In terms of biological role, component of the tartrate utilization system and may allow entry of tartrate and tartrate dehydrogenase. This is Putative tartrate transporter (ttuB) from Agrobacterium vitis (Rhizobium vitis).